The primary structure comprises 83 residues: Normal mucosa of esophagus-specific gene 1 protein (83 aa).

It belongs to the complex I NDUFA4 subunit family.

The protein resides in the nucleus. This chain is Normal mucosa of esophagus-specific gene 1 protein (Nmes1), found in Rattus norvegicus (Rat).